We begin with the raw amino-acid sequence, 171 residues long: Co-chaperone protein HscB (171 aa).

One can recognise a J domain in the interval 2 to 74; it reads DYFTLFGLPA…LMRAEYLLSL (73 aa).

The protein belongs to the HscB family. In terms of assembly, interacts with HscA and stimulates its ATPase activity. Interacts with IscU.

Co-chaperone involved in the maturation of iron-sulfur cluster-containing proteins. Seems to help targeting proteins to be folded toward HscA. The chain is Co-chaperone protein HscB from Shigella boydii serotype 18 (strain CDC 3083-94 / BS512).